The sequence spans 138 residues: Basic phospholipase A2 ammodytoxin C (138 aa).

Residues 1–16 (MRTLWIVAVCLIGVEG) form the signal peptide. 7 disulfide bridges follow: Cys-42–Cys-131, Cys-44–Cys-60, Cys-59–Cys-111, Cys-65–Cys-138, Cys-66–Cys-104, Cys-73–Cys-97, and Cys-91–Cys-102. Tyr-43, Gly-45, and Gly-47 together coordinate Ca(2+). Residue His-63 is part of the active site. Asp-64 is a binding site for Ca(2+). Residue Asp-105 is part of the active site.

Belongs to the phospholipase A2 family. Group II subfamily. D49 sub-subfamily. As to quaternary structure, monomer. Binds to calmodulin, coagulation factor X (F10), 14-3-3 proteins gamma (YWHAG) and epsilon (YWHAE), and R25, a mitochondrial membrane protein. May bind to M-type PLA2 receptor (R-180). It depends on Ca(2+) as a cofactor. Expressed by the venom gland.

Its subcellular location is the secreted. The protein localises to the host cytoplasm. The protein resides in the host cytosol. It carries out the reaction a 1,2-diacyl-sn-glycero-3-phosphocholine + H2O = a 1-acyl-sn-glycero-3-phosphocholine + a fatty acid + H(+). Its function is as follows. Snake venom phospholipase A2 (PLA2) that acts as a presynaptic neurotoxin, an inhibitor of blood coagulation, and has been found to bind with high affinity to intracellular proteins. The response of indirectly stimulated neuromuscular preparations to ammodytoxin (Atx) is triphasic. The first phase, the transient inhibition of the acetylcholine (ACh) release, starts soon after the addition of Atx and lasts for several minutes. This phase is probably independent of Atx enzymatic activity. The effect may be due to the specific binding of the toxin to presynaptic receptors. These receptors, called N-type receptors, are still unidentified. It is noteworthy that a neuronal isoform of the M-type PLA2 receptor (R180) has been identified as a high-affinity receptor for Atx in neuronal plasma membranes. It was demonstrated however that this receptor is not essential for expression of neurotoxicity by Atx. The second phase corresponds to an augmentation of neurotransmitter release. A peak is reached 10-20 minutes after exposure of the preparation to Atx and is followed by a gradual reduction. In this phase, the enzymatic activity of Atx of the mammalian is not significant. It is speculated that the increased release of neurotransmitter in this phase is induced by the interference of Atx with voltage-gated potassium channels. Measurements of ionic showed however that voltage-gated potassium channels are not affected by Atx. The third phase of the response of neuromuscular preparations to Atx, which corresponds to a complete and irreversible paralysis, is clearly dependent on the hydrolytic activity of the toxin. In addition to its presynaptic neurotoxicity, Atx shows an anticoagulant activity by binding with high affinity to activated coagulation factor X (F10) thus inhibiting the formation of the prothrombinase complex (FX/FV) and its activity (IC(50) is 240 nM). Surprisingly, Atx was discovered to bind intracellular proteins such as calmodulin (CaM), 14-3-3 proteins gamma (YWHAG) and epsilon (YWHAE), as well as R25, a mitochondrial integral membrane protein found in cerebral cortex. These findings raised a doubt about the dogma of the exclusively extracellular action of PLA2s, defended by the potential instability of these molecules in the reducing environment of the eukaryotic cytosol coupled with their possible inability to act as enzymes in this cellular compartment, due to too low concentration of calcium ions. This hypothesis was challenged efficiently by demonstrating the internalization of AtxA into a culture cells, but still remains to be directly demonstrated in vivo. PLA2 catalyzes the calcium-dependent hydrolysis of the 2-acyl groups in 3-sn-phosphoglycerides. This is Basic phospholipase A2 ammodytoxin C from Vipera ammodytes ammodytes (Western sand viper).